Consider the following 143-residue polypeptide: Large ribosomal subunit protein uL15 (143 aa).

The disordered stretch occupies residues 1–51 (MELNGIKPAAGAKHAKRRVGRGIGSGIGKTAGRGHKGQKSRAGGFHKVGFE). A compositionally biased stretch (gly residues) spans 21–31 (RGIGSGIGKTA).

The protein belongs to the universal ribosomal protein uL15 family. As to quaternary structure, part of the 50S ribosomal subunit.

Binds to the 23S rRNA. The polypeptide is Large ribosomal subunit protein uL15 (Variovorax paradoxus (strain S110)).